A 428-amino-acid polypeptide reads, in one-letter code: tRNA(Ile2) 2-agmatinylcytidine synthetase TiaS (428 aa).

Belongs to the TiaS family.

The protein localises to the cytoplasm. It carries out the reaction cytidine(34) in tRNA(Ile2) + agmatine + ATP + H2O = 2-agmatinylcytidine(34) in tRNA(Ile2) + AMP + 2 phosphate + 2 H(+). Functionally, ATP-dependent agmatine transferase that catalyzes the formation of 2-agmatinylcytidine (agm2C) at the wobble position (C34) of tRNA(Ile2), converting the codon specificity from AUG to AUA. This chain is tRNA(Ile2) 2-agmatinylcytidine synthetase TiaS, found in Methanosarcina mazei (strain ATCC BAA-159 / DSM 3647 / Goe1 / Go1 / JCM 11833 / OCM 88) (Methanosarcina frisia).